The following is a 121-amino-acid chain: Small ribosomal subunit protein uS13 (121 aa).

A disordered region spans residues 93-121 (RGLPMRGQRTRTNARTRKGPRKAAQSLKK).

It belongs to the universal ribosomal protein uS13 family. In terms of assembly, part of the 30S ribosomal subunit. Forms a loose heterodimer with protein S19. Forms two bridges to the 50S subunit in the 70S ribosome.

Functionally, located at the top of the head of the 30S subunit, it contacts several helices of the 16S rRNA. In the 70S ribosome it contacts the 23S rRNA (bridge B1a) and protein L5 of the 50S subunit (bridge B1b), connecting the 2 subunits; these bridges are implicated in subunit movement. Contacts the tRNAs in the A and P-sites. This is Small ribosomal subunit protein uS13 from Variovorax paradoxus (strain S110).